The chain runs to 132 residues: Large ribosomal subunit protein bL19 (132 aa).

This sequence belongs to the bacterial ribosomal protein bL19 family.

Functionally, this protein is located at the 30S-50S ribosomal subunit interface and may play a role in the structure and function of the aminoacyl-tRNA binding site. The chain is Large ribosomal subunit protein bL19 from Maricaulis maris (strain MCS10) (Caulobacter maris).